The sequence spans 733 residues: Phosphoribosylformylglycinamidine synthase subunit PurL (733 aa).

Histidine 42 is an active-site residue. Positions 45 and 84 each coordinate ATP. Glutamate 86 is a binding site for Mg(2+). Substrate contacts are provided by residues 87–90 (SHNH) and arginine 109. The Proton acceptor role is filled by histidine 88. Aspartate 110 lines the Mg(2+) pocket. Position 233 (glutamine 233) interacts with substrate. Aspartate 261 serves as a coordination point for Mg(2+). 305-307 (ESQ) contributes to the substrate binding site. ATP contacts are provided by aspartate 489 and glycine 526. Asparagine 527 contacts Mg(2+). Serine 529 lines the substrate pocket.

This sequence belongs to the FGAMS family. In terms of assembly, monomer. Part of the FGAM synthase complex composed of 1 PurL, 1 PurQ and 2 PurS subunits.

The protein resides in the cytoplasm. It carries out the reaction N(2)-formyl-N(1)-(5-phospho-beta-D-ribosyl)glycinamide + L-glutamine + ATP + H2O = 2-formamido-N(1)-(5-O-phospho-beta-D-ribosyl)acetamidine + L-glutamate + ADP + phosphate + H(+). It participates in purine metabolism; IMP biosynthesis via de novo pathway; 5-amino-1-(5-phospho-D-ribosyl)imidazole from N(2)-formyl-N(1)-(5-phospho-D-ribosyl)glycinamide: step 1/2. Part of the phosphoribosylformylglycinamidine synthase complex involved in the purines biosynthetic pathway. Catalyzes the ATP-dependent conversion of formylglycinamide ribonucleotide (FGAR) and glutamine to yield formylglycinamidine ribonucleotide (FGAM) and glutamate. The FGAM synthase complex is composed of three subunits. PurQ produces an ammonia molecule by converting glutamine to glutamate. PurL transfers the ammonia molecule to FGAR to form FGAM in an ATP-dependent manner. PurS interacts with PurQ and PurL and is thought to assist in the transfer of the ammonia molecule from PurQ to PurL. This Moorella thermoacetica (strain ATCC 39073 / JCM 9320) protein is Phosphoribosylformylglycinamidine synthase subunit PurL.